The chain runs to 144 residues: Large ribosomal subunit protein uL15 (144 aa).

Positions 1–53 are disordered; it reads MRLNTLSPAEGAKHSAKRLGRGIGSGLGKTGGRGHKGQKSRTGGGVRRGFEGG. Over residues 21-31 the composition is skewed to gly residues; the sequence is RGIGSGLGKTG.

This sequence belongs to the universal ribosomal protein uL15 family. Part of the 50S ribosomal subunit.

Its function is as follows. Binds to the 23S rRNA. The chain is Large ribosomal subunit protein uL15 from Pasteurella multocida (strain Pm70).